The chain runs to 264 residues: Diphthine synthase (264 aa).

S-adenosyl-L-methionine-binding positions include L9, D84, V87, 112–113, L164, A207, and H232; that span reads SI.

This sequence belongs to the diphthine synthase family. In terms of assembly, homodimer.

The catalysed reaction is 2-[(3S)-amino-3-carboxypropyl]-L-histidyl-[translation elongation factor 2] + 3 S-adenosyl-L-methionine = diphthine-[translation elongation factor 2] + 3 S-adenosyl-L-homocysteine + 3 H(+). It functions in the pathway protein modification; peptidyl-diphthamide biosynthesis. S-adenosyl-L-methionine-dependent methyltransferase that catalyzes the trimethylation of the amino group of the modified target histidine residue in translation elongation factor 2 (EF-2), to form an intermediate called diphthine. The three successive methylation reactions represent the second step of diphthamide biosynthesis. This Methanothermobacter thermautotrophicus (strain ATCC 29096 / DSM 1053 / JCM 10044 / NBRC 100330 / Delta H) (Methanobacterium thermoautotrophicum) protein is Diphthine synthase.